An 87-amino-acid polypeptide reads, in one-letter code: Beta-toxin Ct17 (87 aa).

The signal sequence occupies residues 1-19 (MNSLLMITACLVLIGTVWA). Residues 20–85 (KKDGYLVDKT…TWPLPNKRCG (66 aa)) enclose the LCN-type CS-alpha/beta domain. Intrachain disulfides connect C31–C84, C35–C60, C44–C65, and C48–C67. C84 is modified (cysteine amide).

The protein belongs to the long (4 C-C) scorpion toxin superfamily. Sodium channel inhibitor family. Beta subfamily. Expressed by the venom gland.

Its subcellular location is the secreted. Beta toxins bind voltage-independently at site-4 of sodium channels (Nav) and shift the voltage of activation toward more negative potentials thereby affecting sodium channel activation and promoting spontaneous and repetitive firing. Is possibly lethal to mice, freshwater shrimp and crickets. In Centruroides tecomanus (Scorpion), this protein is Beta-toxin Ct17.